The chain runs to 217 residues: 3,4-dihydroxy-2-butanone 4-phosphate synthase (217 aa).

Residues 37-38 (RE), Asp-42, 150-154 (RRGHT), and Glu-174 contribute to the D-ribulose 5-phosphate site. Glu-38 is a binding site for Mg(2+). His-153 provides a ligand contact to Mg(2+).

It belongs to the DHBP synthase family. As to quaternary structure, homodimer. The cofactor is Mg(2+). Requires Mn(2+) as cofactor.

The catalysed reaction is D-ribulose 5-phosphate = (2S)-2-hydroxy-3-oxobutyl phosphate + formate + H(+). It participates in cofactor biosynthesis; riboflavin biosynthesis; 2-hydroxy-3-oxobutyl phosphate from D-ribulose 5-phosphate: step 1/1. In terms of biological role, catalyzes the conversion of D-ribulose 5-phosphate to formate and 3,4-dihydroxy-2-butanone 4-phosphate. This is 3,4-dihydroxy-2-butanone 4-phosphate synthase from Shewanella baltica (strain OS223).